The following is a 206-amino-acid chain: Recombination protein RecR (206 aa).

Residues 60-75 (CARCNTFCEGGLCDIC) form a C4-type zinc finger. Residues 83–178 (RRLMVVHMPA…KVSRLSQGIP (96 aa)) enclose the Toprim domain.

It belongs to the RecR family.

Functionally, may play a role in DNA repair. It seems to be involved in an RecBC-independent recombinational process of DNA repair. It may act with RecF and RecO. This is Recombination protein RecR from Neisseria gonorrhoeae (strain NCCP11945).